A 292-amino-acid polypeptide reads, in one-letter code: 4-hydroxy-tetrahydrodipicolinate synthase (292 aa).

Residue T45 participates in pyruvate binding. Y133 acts as the Proton donor/acceptor in catalysis. The active-site Schiff-base intermediate with substrate is the K161. I203 lines the pyruvate pocket.

Belongs to the DapA family. Homodimer.

Its subcellular location is the cytoplasm. The catalysed reaction is L-aspartate 4-semialdehyde + pyruvate = (2S,4S)-4-hydroxy-2,3,4,5-tetrahydrodipicolinate + H2O + H(+). Its pathway is amino-acid biosynthesis; L-lysine biosynthesis via DAP pathway; (S)-tetrahydrodipicolinate from L-aspartate: step 3/4. In terms of biological role, catalyzes the condensation of (S)-aspartate-beta-semialdehyde [(S)-ASA] and pyruvate to 4-hydroxy-tetrahydrodipicolinate (HTPA). The chain is 4-hydroxy-tetrahydrodipicolinate synthase from Pseudomonas aeruginosa (strain ATCC 15692 / DSM 22644 / CIP 104116 / JCM 14847 / LMG 12228 / 1C / PRS 101 / PAO1).